Consider the following 558-residue polypeptide: Pre-mRNA-processing factor 17 (558 aa).

Disordered stretches follow at residues 1 to 23 and 117 to 197; these read MLVANYSSDSEEQENSQSPNIQP and DDNE…GQNE. Basic and acidic residues predominate over residues 126–141; that stretch reads DLKRKSQKIKERREDP. Low complexity predominate over residues 162 to 171; that stretch reads SEQSSSPLEY. Basic and acidic residues predominate over residues 180–189; it reads LDVKSEKDTE. WD repeat units follow at residues 264-304, 308-349, 351-391, 394-433, 437-476, 484-523, and 526-558; these read GHTK…SLLR, GHAR…NCFN, DRLT…IVQA, HHLGGINSITFLENGKRFVTTSDDSSMRFWEYGTPVPIKF, IAMHSMPRVALRPNGKSIACQSLDNCIYVYSAYEKYRQNK, SCSGYSLEVGFSPDGRFVFSGDSSGNACFWDWKTCKLMAK, and AHSGPVQSMAFHPQETSKVATSSIVDGSIKYWD.

In terms of assembly, belongs to the 40S cdc5-associated complex (or cwf complex), a spliceosome sub-complex reminiscent of a late-stage spliceosome composed of the U2, U5 and U6 snRNAs and at least brr2, cdc5, cwf2/prp3, cwf3/syf1, cwf4/syf3, cwf5/ecm2, spp42/cwf6, cwf7/spf27, cwf8, cwf9, cwf10, cwf11, cwf12, prp45/cwf13, cwf14, cwf15, cwf16, cwf17, cwf18, cwf19, cwf20, cwf21, cwf22, cwf23, cwf24, cwf25, cwf26, cyp7/cwf27, cwf28, cwf29/ist3, lea1, msl1, prp5/cwf1, prp10, prp12/sap130, prp17, prp22, sap61, sap62, sap114, sap145, slu7, smb1, smd1, smd3, smf1, smg1 and syf2.

It localises to the nucleus. In terms of biological role, functions in the second step of pre-mRNA splicing. Involved in splicing intron which are longer than 200 nucleotides. The polypeptide is Pre-mRNA-processing factor 17 (prp17) (Schizosaccharomyces pombe (strain 972 / ATCC 24843) (Fission yeast)).